A 495-amino-acid chain; its full sequence is Meiosis-specific nuclear structural protein 1 (495 aa).

The segment at 1–314 is interaction with BBOF1; sequence MASKRRNMSC…KLEEMLRQRE (314 aa). A coiled-coil region spans residues 59–410; it reads LLQNEQFELD…QLEHRRAVEK (352 aa). A Phosphotyrosine modification is found at Y188.

The protein belongs to the MNS1 family. Able to form oligomers. Microtubule inner protein component of sperm flagellar doublet microtubules. Interacts with ODAD1. Interacts with BBOF1.

Its subcellular location is the nucleus. It localises to the cytoplasm. It is found in the cytoskeleton. The protein resides in the cilium axoneme. The protein localises to the flagellum axoneme. Microtubule inner protein (MIP) part of the dynein-decorated doublet microtubules (DMTs) in cilia axoneme, which is required for motile cilia beating. May play a role in the control of meiotic division and germ cell differentiation through regulation of pairing and recombination during meiosis. Required for sperm flagella assembly. May play a role in the assembly and function of the outer dynein arm-docking complex (ODA-DC). ODA-DC mediates outer dynein arms (ODA) binding onto the axonemal doublet microtubules. The protein is Meiosis-specific nuclear structural protein 1 (MNS1) of Macaca fascicularis (Crab-eating macaque).